A 799-amino-acid chain; its full sequence is Target of rapamycin complex 1 subunit TCO89 (799 aa).

A disordered region spans residues 18–41 (NASTVSHQSKPFRQFSTRSRAKSN). Phosphothreonine is present on residues Thr52 and Thr82. A phosphoserine mark is found at Ser84, Ser104, Ser107, Ser115, and Ser144. The segment covering 97–126 (NQGKRSASFHSPVHNTLLSPKNSSHSNTGT) has biased composition (polar residues). 2 disordered regions span residues 97–171 (NQGK…DNIE) and 201–284 (LQSP…ADID). Residues 147 to 156 (DAQESKKSES) show a composition bias toward basic and acidic residues. Residues 157-170 (TTDEEVECFSEDNI) show a composition bias toward acidic residues. 2 positions are modified to phosphoserine: Ser203 and Ser215. Positions 213 to 224 (DKSGTDGKENHR) are enriched in basic and acidic residues. A compositionally biased stretch (polar residues) spans 233–243 (LSSNNYFGESS). Residues 244 to 253 (HSIEHQKDGE) are compositionally biased toward basic and acidic residues. A compositionally biased stretch (polar residues) spans 254–269 (TSPSSIETKLNATSVI). Ser290 bears the Phosphoserine mark. The segment at 324–391 (AHKSNQKPSH…PDDISSAGTK (68 aa)) is disordered. The span at 332 to 346 (SHSDEQFDQEDHIDA) shows a compositional bias: basic and acidic residues. Low complexity predominate over residues 348-363 (RSNSSRKSDSSFMSLR). Ser397 is modified (phosphoserine). 2 disordered regions span residues 418–476 (FENS…QSTF) and 538–568 (NKNS…RQSN). Polar residues-rich tracts occupy residues 420-429 (NSSSIQNSLG) and 461-476 (GRSQ…QSTF). Phosphoserine is present on Ser575. Residues 663–685 (IRKKSHNDAQSIAHSSSDTDHKD) form a disordered region. A Phosphoserine modification is found at Ser707.

It belongs to the TORC subunit TCO89 family. As to quaternary structure, the target of rapamycin complex 1 (TORC1) is composed of at least KOG1, LST8, TCO89 and either TOR1 (TORC1-A) or TOR2 (TORC1-B). Interacts with PIB2; following activation of PIB2 by glutamine or cysteine. TORC1 binds to and is inhibited by FKBP-rapamycin.

It is found in the cell membrane. The protein resides in the vacuole membrane. Functionally, component of TORC1, which regulates multiple cellular processes to control cell growth in response to environmental signals. Nutrient limitation and environmental stress signals cause inactivation of TORC1. Active TORC1 positively controls ribosome biogenesis via control of rRNA, ribosomal protein and tRNA gene expression, and rRNA processing. TORC1 positively controls protein biosynthesis by regulation of mRNA stability, translation initiation factor activity, and high-affinity amino acid permeases that serve to provide amino acids for use by the translation machinery. TORC1 also promotes growth by sequestering a number of nutrient and general stress-responsive transcription factors in the cytoplasm. TORC1 negatively controls macroautophagy, a process to recycle surplus cytoplasmic mass under nutrient starvation conditions. The sequence is that of Target of rapamycin complex 1 subunit TCO89 (TCO89) from Saccharomyces cerevisiae (strain ATCC 204508 / S288c) (Baker's yeast).